We begin with the raw amino-acid sequence, 665 residues long: F-box/WD repeat-containing protein lin-23 (665 aa).

Residues 81 to 127 form the F-box domain; the sequence is RDFISNLPAHLVELILFNVNSDSLKSCEEVSTSWRCALARGQHWKKL. WD repeat units follow at residues 220–257, 260–299, 301–337, 343–380, 383–420, 423–460, and 472–509; these read ENSK…CSRI, GHTG…KTLI, HCEA…DITI, GHRA…FVRT, GHRR…CLRV, GHEE…DPRA, and QHTG…PSGL. Residues 574–665 form a disordered region; the sequence is AAAEAARGAG…VDEEMPDGGP (92 aa). 2 stretches are compositionally biased toward acidic residues: residues 584-595 and 655-665; these read DNDESSSEEDLD and DVDEEMPDGGP.

In terms of assembly, part of a SCF (SKP1-cullin-F-box) protein ligase complex.

It is found in the cytoplasm. Its function is as follows. Functions cell autonomously to negatively regulate cell cycle progression. Required to restrain cell proliferation in response to developmental cues. Probably recognizes and binds to some proteins and promotes their ubiquitination and degradation. This chain is F-box/WD repeat-containing protein lin-23 (lin-23), found in Caenorhabditis elegans.